A 155-amino-acid polypeptide reads, in one-letter code: Small ribosomal subunit protein uS7c (155 aa).

Belongs to the universal ribosomal protein uS7 family. As to quaternary structure, part of the 30S ribosomal subunit.

It is found in the plastid. Its subcellular location is the chloroplast. In terms of biological role, one of the primary rRNA binding proteins, it binds directly to 16S rRNA where it nucleates assembly of the head domain of the 30S subunit. In Beta vulgaris (Sugar beet), this protein is Small ribosomal subunit protein uS7c.